The sequence spans 126 residues: Large ribosomal subunit protein bL12 (126 aa).

The protein belongs to the bacterial ribosomal protein bL12 family. In terms of assembly, homodimer. Part of the ribosomal stalk of the 50S ribosomal subunit. Forms a multimeric L10(L12)X complex, where L10 forms an elongated spine to which 2 to 4 L12 dimers bind in a sequential fashion. Binds GTP-bound translation factors.

Functionally, forms part of the ribosomal stalk which helps the ribosome interact with GTP-bound translation factors. Is thus essential for accurate translation. The protein is Large ribosomal subunit protein bL12 of Acidovorax ebreus (strain TPSY) (Diaphorobacter sp. (strain TPSY)).